We begin with the raw amino-acid sequence, 347 residues long: Probable E3 ubiquitin-protein ligase DTX3 (347 aa).

Residues 113–157 (EHPEMHRAGPPPLRAAPLLPPGARGLPPPPPPLPPPLPPRLREEA) are disordered. Residues 121-151 (GPPPLRAAPLLPPGARGLPPPPPPLPPPLPP) show a composition bias toward pro residues. The RING-type zinc-finger motif lies at 164–205 (CPICLGEIQNAKTLEKCRHSFCEGCITRALQVKKACPMCGRF).

It belongs to the Deltex family. As to quaternary structure, homodimer. May form a heterodimers with other members of the Deltex family. Interacts with NOTCH1.

The protein localises to the cytoplasm. The enzyme catalyses S-ubiquitinyl-[E2 ubiquitin-conjugating enzyme]-L-cysteine + [acceptor protein]-L-lysine = [E2 ubiquitin-conjugating enzyme]-L-cysteine + N(6)-ubiquitinyl-[acceptor protein]-L-lysine.. The protein operates within protein modification; protein ubiquitination. Functionally, regulator of Notch signaling, a signaling pathway involved in cell-cell communications that regulates a broad spectrum of cell-fate determinations. Probably acts both as a positive and negative regulator of Notch, depending on the developmental and cell context. Functions as an ubiquitin ligase protein in vitro, suggesting that it may regulate the Notch pathway via some ubiquitin ligase activity. The protein is Probable E3 ubiquitin-protein ligase DTX3 (DTX3) of Homo sapiens (Human).